Here is a 1167-residue protein sequence, read N- to C-terminus: Carbamoyl phosphate synthase large chain (1167 aa).

The tract at residues 1 to 455 (MPRRTDIKSI…SLQKALRGLE (455 aa)) is carboxyphosphate synthetic domain. Residues R129, R221, G227, G228, E260, V262, E267, G293, V294, H295, Q337, and E351 each coordinate ATP. An ATP-grasp 1 domain is found at 184 to 380 (LETRWNLGEG…IAKIAAKLAV (197 aa)). Q337, E351, and N353 together coordinate Mg(2+). The Mn(2+) site is built by Q337, E351, and N353. Residues 456 to 619 (TGLTGLDEIE…PFAGALANEA (164 aa)) are oligomerization domain. Positions 620–1031 (QVSSRKKVVI…AFAKSQLGAG (412 aa)) are carbamoyl phosphate synthetic domain. Positions 748–960 (QKLLHKLGLS…IAKIAARIMA (213 aa)) constitute an ATP-grasp 2 domain. ATP is bound by residues R784, T844, L846, E851, G876, I877, H878, S879, Q919, and E931. Mg(2+) contacts are provided by Q919, E931, and N933. Residues Q919, E931, and N933 each coordinate Mn(2+). Residues 1032 to 1167 (VDLPRSGTLF…EVRPLQEYFA (136 aa)) form the MGS-like domain. Residues 1032 to 1167 (VDLPRSGTLF…EVRPLQEYFA (136 aa)) are allosteric domain.

The protein belongs to the CarB family. Composed of two chains; the small (or glutamine) chain promotes the hydrolysis of glutamine to ammonia, which is used by the large (or ammonia) chain to synthesize carbamoyl phosphate. Tetramer of heterodimers (alpha,beta)4. Requires Mg(2+) as cofactor. It depends on Mn(2+) as a cofactor.

The catalysed reaction is hydrogencarbonate + L-glutamine + 2 ATP + H2O = carbamoyl phosphate + L-glutamate + 2 ADP + phosphate + 2 H(+). It carries out the reaction hydrogencarbonate + NH4(+) + 2 ATP = carbamoyl phosphate + 2 ADP + phosphate + 2 H(+). Its pathway is amino-acid biosynthesis; L-arginine biosynthesis; carbamoyl phosphate from bicarbonate: step 1/1. It participates in pyrimidine metabolism; UMP biosynthesis via de novo pathway; (S)-dihydroorotate from bicarbonate: step 1/3. In terms of biological role, large subunit of the glutamine-dependent carbamoyl phosphate synthetase (CPSase). CPSase catalyzes the formation of carbamoyl phosphate from the ammonia moiety of glutamine, carbonate, and phosphate donated by ATP, constituting the first step of 2 biosynthetic pathways, one leading to arginine and/or urea and the other to pyrimidine nucleotides. The large subunit (synthetase) binds the substrates ammonia (free or transferred from glutamine from the small subunit), hydrogencarbonate and ATP and carries out an ATP-coupled ligase reaction, activating hydrogencarbonate by forming carboxy phosphate which reacts with ammonia to form carbamoyl phosphate. The polypeptide is Carbamoyl phosphate synthase large chain (Mesorhizobium japonicum (strain LMG 29417 / CECT 9101 / MAFF 303099) (Mesorhizobium loti (strain MAFF 303099))).